A 368-amino-acid polypeptide reads, in one-letter code: Spore germination protein B2 (368 aa).

Transmembrane regions (helical) follow at residues 10-30 (FMQT…LTLP), 43-63 (LMIL…LPFL), 82-102 (FIGF…VCFQ), 120-140 (MAVV…GGVY), 145-165 (VYAY…MFSF), 187-207 (LFPK…LVPF), 217-237 (AVAL…LIVI), 282-302 (FACM…IFHL), 308-328 (AWLL…PKDL), and 338-358 (LGYA…LSWI).

It belongs to the amino acid-polyamine-organocation (APC) superfamily. Spore germination protein (SGP) (TC 2.A.3.9) family.

Its subcellular location is the cell membrane. Its function is as follows. Involved in the response to the germinative mixture of L-asparagine, glucose, fructose and potassium ions (AGFK). Could be an amino acid transporter. Cannot stimulate germination in the absence of gerD and gerK gene products (fructose and glucose receptors, respectively). This Bacillus subtilis (strain 168) protein is Spore germination protein B2 (gerBB).